Reading from the N-terminus, the 192-residue chain is Ribosome maturation factor RimM (192 aa).

Positions 99 to 186 (ADEYHVSELV…RIEIAPPPGL (88 aa)) constitute a PRC barrel domain.

Belongs to the RimM family. Binds ribosomal protein uS19.

Its subcellular location is the cytoplasm. Its function is as follows. An accessory protein needed during the final step in the assembly of 30S ribosomal subunit, possibly for assembly of the head region. Essential for efficient processing of 16S rRNA. May be needed both before and after RbfA during the maturation of 16S rRNA. It has affinity for free ribosomal 30S subunits but not for 70S ribosomes. The chain is Ribosome maturation factor RimM from Microcystis aeruginosa (strain NIES-843 / IAM M-2473).